A 57-amino-acid polypeptide reads, in one-letter code: UPF0391 membrane protein RPA3029 (57 aa).

The next 2 membrane-spanning stretches (helical) occupy residues 6-26 (WALI…TGIS) and 35-55 (ILFY…FTIF).

This sequence belongs to the UPF0391 family.

It localises to the cell membrane. This is UPF0391 membrane protein RPA3029 from Rhodopseudomonas palustris (strain ATCC BAA-98 / CGA009).